The sequence spans 352 residues: Secretion system apparatus protein SsaU (352 aa).

4 consecutive transmembrane segments (helical) span residues 34–54 (LIALYLYFHFFTEKMILILIE), 89–109 (LGAGVIVATVGSVFLQVGVVI), 144–164 (LKVIMLSLIFAFFFYYYASTF), and 176–196 (VLVVSSLIKWLWVGVMVFYIV).

This sequence belongs to the type III secretion exporter family.

It localises to the cell membrane. Part of a type III secretion system. The chain is Secretion system apparatus protein SsaU (ssaU) from Salmonella typhimurium (strain LT2 / SGSC1412 / ATCC 700720).